Here is a 542-residue protein sequence, read N- to C-terminus: Chaperonin GroEL 1 (542 aa).

ATP is bound by residues 29–32, 86–90, G415, 479–481, and D495; these read TIGP, DGTTT, and NAA.

The protein belongs to the chaperonin (HSP60) family. In terms of assembly, forms a cylinder of 14 subunits composed of two heptameric rings stacked back-to-back. Interacts with the co-chaperonin GroES.

The protein resides in the cytoplasm. It carries out the reaction ATP + H2O + a folded polypeptide = ADP + phosphate + an unfolded polypeptide.. In terms of biological role, together with its co-chaperonin GroES, plays an essential role in assisting protein folding. The GroEL-GroES system forms a nano-cage that allows encapsulation of the non-native substrate proteins and provides a physical environment optimized to promote and accelerate protein folding. This Streptomyces avermitilis (strain ATCC 31267 / DSM 46492 / JCM 5070 / NBRC 14893 / NCIMB 12804 / NRRL 8165 / MA-4680) protein is Chaperonin GroEL 1.